A 531-amino-acid polypeptide reads, in one-letter code: Probable peptide ABC transporter periplasmic-binding protein y4tO (531 aa).

A signal peptide (tat-type signal) is located at residues 1–32; that stretch reads MTISRRDLFKAGLAAGAALSVPSLLRAQTAVA.

This sequence belongs to the bacterial solute-binding protein 5 family. Predicted to be exported by the Tat system. The position of the signal peptide cleavage has not been experimentally proven.

It is found in the periplasm. In terms of biological role, probably part of the binding-protein-dependent transport system y4tOPQRS for a peptide. This Sinorhizobium fredii (strain NBRC 101917 / NGR234) protein is Probable peptide ABC transporter periplasmic-binding protein y4tO.